Reading from the N-terminus, the 2334-residue chain is Centriolin (2334 aa).

The segment at Met-1–Gln-70 is disordered. The segment covering Pro-21–Leu-38 has biased composition (low complexity). LRR repeat units lie at residues Lys-126–Leu-147, Arg-148–Cys-169, Asn-170–Lys-191, and Ser-194–Lys-215. The LRRCT domain maps to Asn-228–Arg-266. 2 coiled-coil regions span residues Glu-265 to Thr-343 and Asp-437 to Val-800. Disordered regions lie at residues Asp-542–Glu-562 and Ser-751–Glu-771. Ser-832 bears the Phosphoserine mark. A coiled-coil region spans residues Glu-858 to Leu-1102. Disordered regions lie at residues Ser-1154–Ala-1198, Lys-1213–Pro-1245, and Leu-1338–Asp-1360. A compositionally biased stretch (acidic residues) spans Ser-1227–Glu-1238. The stretch at Glu-1320 to Asp-2169 forms a coiled coil. The residue at position 1478 (Ser-1478) is a Phosphoserine. Residues Met-1951 to Arg-2121 are required for centrosome localization. The segment at Gln-1988 to His-2334 is sufficient for interaction with HOOK2. The span at Thr-2291 to Val-2307 shows a compositional bias: low complexity. A disordered region spans residues Thr-2291–His-2334.

Interacts with HOOK2. Interacts with EXOC6 and SNAPIN. Associates with the exocyst complex. As to expression, highly expressed in liver.

It is found in the cytoplasm. The protein localises to the cytoskeleton. Its subcellular location is the microtubule organizing center. The protein resides in the centrosome. It localises to the midbody. It is found in the midbody ring. Involved in cell cycle progression and cytokinesis. During the late steps of cytokinesis, anchors exocyst and SNARE complexes at the midbody, thereby allowing secretory vesicle-mediated abscission. This is Centriolin (Cntrl) from Mus musculus (Mouse).